The sequence spans 624 residues: Forkhead box protein O1 (624 aa).

Disordered regions lie at residues 1-62 (MAEA…PSAS) and 94-128 (APLS…SRRN). At Thr-24 the chain carries Phosphothreonine; by PKB/AKT1 or PKB/AKT2 and SGK1. Low complexity-rich tracts occupy residues 37–62 (SATS…PSAS) and 105–119 (AAAA…AGQP). Positions 130 to 224 (WGNLSYADLI…KSGKSPRRRA (95 aa)) form a DNA-binding region, fork-head. 2 DNA-binding regions span residues 181–188 (NSIRHNLS) and 204–207 (SSWW). At Ser-182 the chain carries Phosphoserine; by STK4/MST1. A phosphoserine mark is found at Ser-188, Ser-204, and Ser-205. The disordered stretch occupies residues 204–306 (SSWWMLNPEG…RLSPIMTEQD (103 aa)). N6-acetyllysine is present on residues Lys-215 and Lys-218. Position 219 is a phosphoserine; by CDK1 (Ser-219). Omega-N-methylarginine; by PRMT1 is present on residues Arg-221 and Arg-223. A Nuclear localization signal motif is present at residues 221–223 (RRR). Phosphoserine; by PKB/AKT1 and SGK1 is present on Ser-226. An N6-acetyllysine mark is found at Lys-232, Lys-235, and Lys-244. Residues 234–245 (AKSRGRAAKKKA) are compositionally biased toward basic residues. Residues 253 to 532 (GAGDSPGSQF…RLAPVKTALQ (280 aa)) are sufficient for interaction with NLK. Phosphoserine is present on residues Ser-257 and Ser-268. Over residues 279–296 (NWSTFRPRTSSNASTISG) the composition is skewed to polar residues. At Ser-289 the chain carries Phosphoserine; by PKB/AKT1. Ser-292 carries the phosphoserine; by CK1 and SGK1 modification. Ser-295 is subject to Phosphoserine; by CK1. Ser-299 carries the phosphoserine; by DYRK1A modification. Phosphothreonine is present on Thr-303. A required for interaction with RUNX2 region spans residues 333 to 428 (SEISNPENME…YGGMSQYCAP (96 aa)). Lys-393 is modified (N6-acetyllysine). The Required for interaction with SIRT1 motif lies at 431–435 (LKELL).

Interacts with LRPPRC. Interacts with RUNX2; the interaction inhibits RUNX2 transcriptional activity and mediates the IGF1/insulin-dependent BGLAP expression in osteoblasts Interacts with PPP2R1A; the interaction regulates the dephosphorylation of FOXO1 at Thr-24 and Ser-263 leading to its nuclear import. Interacts with NLK. Interacts with SIRT1; the interaction results in the deacetylation of FOXO1 leading to activation of FOXO1-mediated transcription of genes involved in DNA repair and stress resistance. Binds to CDK1. Interacts with the 14-3-3 proteins, YWHAG and YWHAZ; the interactions require insulin-stimulated phosphorylation on Thr-24, promote nuclear exit and loss of transcriptional activity. Interacts with SKP2; the interaction ubiquitinates FOXO1 leading to its proteasomal degradation. The interaction requires the presence of KRIT1. Interacts (via the C-terminal half) with ATF4 (via its DNA binding domain); the interaction occurs in osteoblasts, regulates glucose homeostasis via suppression of beta-cell proliferation and subsequent decrease in insulin production. Interacts with PRMT1; the interaction methylates FOXO1, prevents PKB/AKT1 phosphorylation and retains FOXO1 in the nucleus. Interacts with EP300 and CREBBP; the interactions acetylate FOXO1. Interacts with SIRT2; the interaction is disrupted in response to oxidative stress or serum deprivation, leading to increased level of acetylated FOXO1, which promotes stress-induced autophagy by stimulating E1-like activating enzyme ATG7. Interacts (acetylated form) with ATG7; the interaction is increased in response to oxidative stress or serum deprivation and promotes the autophagic process leading to cell death. Interacts (acetylated form) with PPARG. Interacts with XBP1; this interaction is direct and leads to FOXO1 ubiquitination and degradation via the proteasome pathway. Interacts (via the Fork-head domain) with CEBPA; the interaction increases when FOXO1 is deacetylated. Interacts with WDFY2. Forms a complex with WDFY2 and AKT1. Interacts with CRY1. Interacts with PPIA/CYPA; the interaction promotes FOXO1 dephosphorylation, nuclear accumulation and transcriptional activity. Interacts with TOX4; FOXO1 is required for full induction of TOX4-dependent activity and the interaction is inhibited by insulin. Interacts (when phosphorylated on Ser-226) with STUB1/CHIP. Phosphorylation by NLK promotes nuclear export and inhibits the transcriptional activity. In response to growth factors, phosphorylation on Thr-24, Ser-226 and Ser-292 by PKB/AKT1 promotes nuclear export and inactivation of transactivational activity. Phosphorylation on Thr-24 is required for binding 14-3-3 proteins. Phosphorylation of Ser-226 decreases DNA-binding activity and promotes the phosphorylation of Thr-24 and Ser-289, permitting phosphorylation of Ser-292 and Ser-295, probably by CDK1, leading to nuclear exclusion and loss of function. Stress signals, such as response to oxygen or nitric oxide, attenuate the PKB/AKT1-mediated phosphorylation leading to nuclear retention. Phosphorylation of Ser-299 is independent of IGF1 and leads to reduced function. Dephosphorylated on Thr-24 and Ser-226 by PP2A in beta-cells under oxidative stress leading to nuclear retention. Phosphorylation of Ser-219 by CDK1 disrupts binding of 14-3-3 proteins leading to nuclear accumulation and has no effect on DNA binding nor transcriptional activity. Phosphorylation by STK4/MST1 on Ser-182, upon oxidative stress, inhibits binding to 14-3-3 proteins and nuclear export. PPIA/CYPA promotes its dephosphorylation on Ser-226. Post-translationally, ubiquitinated by SKP2. Ubiquitination leads to proteasomal degradation. Ubiquitinated by STUB1/CHIP; when Ser-226 is phosphorylated. In terms of processing, methylation inhibits AKT1-mediated phosphorylation at Ser-226 and is increased by oxidative stress. Acetylated. Acetylation at Lys-232 and Lys-244 are necessary for autophagic cell death induction. Deacetylated by SIRT2 in response to oxidative stress or serum deprivation, thereby negatively regulating FOXO1-mediated autophagic cell death. Once in the nucleus, acetylated by CREBBP/EP300. Acetylation diminishes the interaction with target DNA and attenuates the transcriptional activity. It increases the phosphorylation at Ser-226. Deacetylation by SIRT1 results in reactivation of the transcriptional activity. Oxidative stress by hydrogen peroxide treatment appears to promote deacetylation and uncoupling of insulin-induced phosphorylation. By contrast, resveratrol acts independently of acetylation. Acetylated at Lys-393, promoting its localization to the nucleus and transcription factor activity. Deacetylation at Lys-393 by SIRT6, promotes its translocation into the cytoplasm, preventing its transcription factor activity. Deacetylation and subsequent inhibition by SIRT6 has different effects depending on cell types: it inhibits gluconeogenesis in hepatocytes, promotes glucose sensing in pancreatic beta-cells and regulates lipid catabolism in brown adipocytes.

It is found in the cytoplasm. The protein localises to the nucleus. Functionally, transcription factor that is the main target of insulin signaling and regulates metabolic homeostasis in response to oxidative stress. Binds to the insulin response element (IRE) with consensus sequence 5'-TT[G/A]TTTTG-3' and the related Daf-16 family binding element (DBE) with consensus sequence 5'-TT[G/A]TTTAC-3'. Activity suppressed by insulin. Main regulator of redox balance and osteoblast numbers and controls bone mass. Orchestrates the endocrine function of the skeleton in regulating glucose metabolism. Also acts as a key regulator of chondrogenic commitment of skeletal progenitor cells in response to lipid availability: when lipids levels are low, translocates to the nucleus and promotes expression of SOX9, which induces chondrogenic commitment and suppresses fatty acid oxidation. Acts synergistically with ATF4 to suppress osteocalcin/BGLAP activity, increasing glucose levels and triggering glucose intolerance and insulin insensitivity. Also suppresses the transcriptional activity of RUNX2, an upstream activator of osteocalcin/BGLAP. Acts as an inhibitor of glucose sensing in pancreatic beta cells by acting as a transcription repressor and suppressing expression of PDX1. In hepatocytes, promotes gluconeogenesis by acting together with PPARGC1A and CEBPA to activate the expression of genes such as IGFBP1, G6PC1 and PCK1. Also promotes gluconeogenesis by directly promoting expression of PPARGC1A and G6PC1. Important regulator of cell death acting downstream of CDK1, PKB/AKT1 and STK4/MST1. Promotes neural cell death. Mediates insulin action on adipose tissue. Regulates the expression of adipogenic genes such as PPARG during preadipocyte differentiation and, adipocyte size and adipose tissue-specific gene expression in response to excessive calorie intake. Regulates the transcriptional activity of GADD45A and repair of nitric oxide-damaged DNA in beta-cells. Required for the autophagic cell death induction in response to starvation or oxidative stress in a transcription-independent manner. Mediates the function of MLIP in cardiomyocytes hypertrophy and cardiac remodeling. Positive regulator of apoptosis in cardiac smooth muscle cells as a result of its transcriptional activation of pro-apoptotic genes. Regulates endothelial cell (EC) viability and apoptosis in a PPIA/CYPA-dependent manner via transcription of CCL2 and BCL2L11 which are involved in EC chemotaxis and apoptosis. The protein is Forkhead box protein O1 (FOXO1) of Bos taurus (Bovine).